The primary structure comprises 396 residues: Elongation factor Tu (396 aa).

Residues 10 to 206 enclose the tr-type G domain; it reads KPHVNVGTIG…ALDSFIPEPT (197 aa). The interval 19–26 is G1; the sequence is GHVDHGKT. 19–26 contacts GTP; the sequence is GHVDHGKT. Threonine 26 is a binding site for Mg(2+). Residues 60–64 form a G2 region; the sequence is GITIS. The tract at residues 81 to 84 is G3; that stretch reads DCPG. Residues 81 to 85 and 136 to 139 contribute to the GTP site; these read DCPGH and NKAD. A G4 region spans residues 136-139; sequence NKAD. Positions 174–176 are G5; sequence SAR.

The protein belongs to the TRAFAC class translation factor GTPase superfamily. Classic translation factor GTPase family. EF-Tu/EF-1A subfamily. As to quaternary structure, monomer.

It is found in the cytoplasm. The enzyme catalyses GTP + H2O = GDP + phosphate + H(+). In terms of biological role, GTP hydrolase that promotes the GTP-dependent binding of aminoacyl-tRNA to the A-site of ribosomes during protein biosynthesis. This chain is Elongation factor Tu, found in Xanthomonas euvesicatoria pv. vesicatoria (strain 85-10) (Xanthomonas campestris pv. vesicatoria).